Here is a 320-residue protein sequence, read N- to C-terminus: Phospho-N-acetylmuramoyl-pentapeptide-transferase (320 aa).

The next 10 helical transmembrane spans lie at 6 to 26, 54 to 74, 81 to 101, 117 to 137, 145 to 165, 175 to 195, 200 to 220, 226 to 246, 251 to 271, and 300 to 320; these read FLTPLMSGFVITVIFMPLFIG, MGGLVFIVAAVISSIWVAIWL, LWIALFILVLYGLLGFSDDFI, LAGQILGGAVFLAVYFHEGFS, IGTISSSWFFSLFVIVWLVGF, IDGLVAGLAIVSFATYTIIAF, IDVAIFGLTIIGGLIGFLIFN, IFMGDVGSLALGGALAAMSIL, FSLLLIGLVYVIETASVMLQV, and RIDISFWVFSIICSAIYLLIF.

It belongs to the glycosyltransferase 4 family. MraY subfamily. Mg(2+) serves as cofactor.

The protein localises to the cell membrane. It catalyses the reaction UDP-N-acetyl-alpha-D-muramoyl-L-alanyl-gamma-D-glutamyl-L-lysyl-D-alanyl-D-alanine + di-trans,octa-cis-undecaprenyl phosphate = Mur2Ac(oyl-L-Ala-gamma-D-Glu-L-Lys-D-Ala-D-Ala)-di-trans,octa-cis-undecaprenyl diphosphate + UMP. The protein operates within cell wall biogenesis; peptidoglycan biosynthesis. Functionally, catalyzes the initial step of the lipid cycle reactions in the biosynthesis of the cell wall peptidoglycan: transfers peptidoglycan precursor phospho-MurNAc-pentapeptide from UDP-MurNAc-pentapeptide onto the lipid carrier undecaprenyl phosphate, yielding undecaprenyl-pyrophosphoryl-MurNAc-pentapeptide, known as lipid I. The protein is Phospho-N-acetylmuramoyl-pentapeptide-transferase of Latilactobacillus sakei subsp. sakei (strain 23K) (Lactobacillus sakei subsp. sakei).